We begin with the raw amino-acid sequence, 163 residues long: Auxin-responsive protein IAA5 (163 aa).

An EAR-like (transcriptional repression) motif is present at residues 15-19 (LRLGL). Residues 74-160 (SSYVKVSVDG…KRLRIMKRSC (87 aa)) form the PB1 domain.

This sequence belongs to the Aux/IAA family. As to quaternary structure, homodimers and heterodimers. Highly expressed in stems and flowers.

The protein resides in the nucleus. Functionally, aux/IAA proteins are short-lived transcriptional factors that function as repressors of early auxin response genes at low auxin concentrations. Repression is thought to result from the interaction with auxin response factors (ARFs), proteins that bind to the auxin-responsive promoter element (AuxRE). Formation of heterodimers with ARF proteins may alter their ability to modulate early auxin response genes expression. This is Auxin-responsive protein IAA5 (IAA5) from Arabidopsis thaliana (Mouse-ear cress).